The sequence spans 267 residues: Tryptophan synthase alpha chain (267 aa).

Active-site proton acceptor residues include E49 and D60.

The protein belongs to the TrpA family. As to quaternary structure, tetramer of two alpha and two beta chains.

The enzyme catalyses (1S,2R)-1-C-(indol-3-yl)glycerol 3-phosphate + L-serine = D-glyceraldehyde 3-phosphate + L-tryptophan + H2O. It participates in amino-acid biosynthesis; L-tryptophan biosynthesis; L-tryptophan from chorismate: step 5/5. In terms of biological role, the alpha subunit is responsible for the aldol cleavage of indoleglycerol phosphate to indole and glyceraldehyde 3-phosphate. This is Tryptophan synthase alpha chain from Acidothermus cellulolyticus (strain ATCC 43068 / DSM 8971 / 11B).